We begin with the raw amino-acid sequence, 286 residues long: Divergent deoxyribose-phosphate aldolase-like protein (286 aa).

In terms of assembly, homodimer. Interacts with ADF; the interaction enhances ADF activity in disassembly of filamentous actin and inhibition of actin polymerization.

It is found in the cytoplasm. Functionally, involved in regulation of actin dynamics. The polypeptide is Divergent deoxyribose-phosphate aldolase-like protein (Toxoplasma gondii).